Here is a 335-residue protein sequence, read N- to C-terminus: MDKMKIIMEKGTERLKRGFAKMVKGGVIMDVTNAEQARIAEEAGAVAVMALHKVPADIRKAGGVARMAPVEKIQEIMDAVTIPVMAKVRIGHEAEARILEALGVDMIDESEVLTPADPFFHIYKKKFTVPFVCGARNLGEAVRRIWEGAAMIRTKGEAGTGNIIEAVRHVRLVNENIRLIQRMTDEEIYGVAEKFAEPYLRLAFSVKEISGLPKRVLENEPIYEGFTYREIVDGLYKILLEIKKLGRLPVVNFAAGGVATPADAALMMAMGMDGVFVGSGIFKSSNPPAMARAIVEAVNHWDEPDVLAEISREIGEPMRGQDIAELEVRMEERGV.

A D-ribose 5-phosphate-binding site is contributed by Asp-30. Residue Lys-87 is the Schiff-base intermediate with D-ribose 5-phosphate of the active site. Gly-159 provides a ligand contact to D-ribose 5-phosphate. Arg-171 contacts D-glyceraldehyde 3-phosphate. D-ribose 5-phosphate-binding positions include Gly-257 and 278-279; that span reads GS.

This sequence belongs to the PdxS/SNZ family. In the presence of PdxT, forms a dodecamer of heterodimers.

It catalyses the reaction aldehydo-D-ribose 5-phosphate + D-glyceraldehyde 3-phosphate + L-glutamine = pyridoxal 5'-phosphate + L-glutamate + phosphate + 3 H2O + H(+). The protein operates within cofactor biosynthesis; pyridoxal 5'-phosphate biosynthesis. Its function is as follows. Catalyzes the formation of pyridoxal 5'-phosphate from ribose 5-phosphate (RBP), glyceraldehyde 3-phosphate (G3P) and ammonia. The ammonia is provided by the PdxT subunit. Can also use ribulose 5-phosphate and dihydroxyacetone phosphate as substrates, resulting from enzyme-catalyzed isomerization of RBP and G3P, respectively. The sequence is that of Pyridoxal 5'-phosphate synthase subunit PdxS from Pyrococcus furiosus (strain ATCC 43587 / DSM 3638 / JCM 8422 / Vc1).